The primary structure comprises 348 residues: MPGWRLLTQVGAQVLGRLGDGLGAALGPGNRTHIWLFVRGLHGKSGTWWDEHLSEENVPFIKQLVSDEDKAQLASKLCPLKDEPWPIHPWEPGSFRVGLIALKLGMMPLWTKDGQKHVVTLLQVQDCHVLKYTSKENCNGKMATLSVGGKTVSRFRKATSILEFYRELGLPPKQTVKIFNITDNAAIKPGTPLYAAHFRPGQYVDVTAKTIGKGFQGVMKRWGFKGQPATHGQTKTHRRPGAVATGDIGRVWPGTKMPGKMGNIYRTEYGLKVWRINTKHNIIYVNGSVPGHKNCLVKVKDSKLPAYKDLGKNLPFPTYFPDGDEEELPEDLYDENVCQPGAPSITFA.

A mitochondrion-targeting transit peptide spans 1–40 (MPGWRLLTQVGAQVLGRLGDGLGAALGPGNRTHIWLFVRG).

Belongs to the universal ribosomal protein uL3 family. Component of the mitochondrial large ribosomal subunit (mt-LSU). Mature mammalian 55S mitochondrial ribosomes consist of a small (28S) and a large (39S) subunit. The 28S small subunit contains a 12S ribosomal RNA (12S mt-rRNA) and 30 different proteins. The 39S large subunit contains a 16S rRNA (16S mt-rRNA), a copy of mitochondrial valine transfer RNA (mt-tRNA(Val)), which plays an integral structural role, and 52 different proteins.

It localises to the mitochondrion. The protein is Large ribosomal subunit protein uL3m (MRPL3) of Homo sapiens (Human).